The sequence spans 248 residues: Probable proteasome subunit alpha type-3 (248 aa).

It belongs to the peptidase T1A family. As to quaternary structure, the 26S proteasome consists of a 20S proteasome core and two 19S regulatory subunits. The 20S proteasome core is composed of 28 subunits that are arranged in four stacked rings, resulting in a barrel-shaped structure. The two end rings are each formed by seven alpha subunits, and the two central rings are each formed by seven beta subunits. The catalytic chamber with the active sites is on the inside of the barrel.

It localises to the cytoplasm. It is found in the nucleus. In terms of biological role, the proteasome is a multicatalytic proteinase complex which is characterized by its ability to cleave peptides with Arg, Phe, Tyr, Leu, and Glu adjacent to the leaving group at neutral or slightly basic pH. The proteasome has an ATP-dependent proteolytic activity. The protein is Probable proteasome subunit alpha type-3 of Schizosaccharomyces pombe (strain 972 / ATCC 24843) (Fission yeast).